The primary structure comprises 328 residues: Putative P2Y purinoceptor 10 (328 aa).

Topologically, residues 1-27 (MGSNSTSSAESNCNATYLPFQYSLYAT) are extracellular. Residues N4 and N14 are each glycosylated (N-linked (GlcNAc...) asparagine). A helical transmembrane segment spans residues 28–48 (TYIFIFIPGLLANSAALWVLC). The Cytoplasmic segment spans residues 49–56 (RFISKKNK). A helical membrane pass occupies residues 57 to 77 (AIIFMINLSVADLAHILSLPL). Topologically, residues 78 to 91 (RIYYYINRHWPFQR) are extracellular. Residues 92-112 (ALCLLCFYLKYLNMYASIFFL) traverse the membrane as a helical segment. A disulfide bridge links C94 with C170. The Cytoplasmic portion of the chain corresponds to 113-137 (TCISLQRCLFLLKPFRARNWKRRYD). Residues 138-158 (VGISAVIWIVVGTACLPFPIL) form a helical membrane-spanning segment. Topologically, residues 159-182 (RNAGLANSTDSCFADLGYKQMDAV) are extracellular. Residues 183 to 203 (VLVTMVVIAELAGFVIPVITI) traverse the membrane as a helical segment. The Cytoplasmic portion of the chain corresponds to 204-233 (ACCTWKTTVSLKHPPIAFQGISERKKALRM). The chain crosses the membrane as a helical span at residues 234–254 (VFMCAAVFVICFTPYHINFIF). Residues 255 to 277 (YTMVKESIITSCPTVKSTLYFHP) lie on the Extracellular side of the membrane. The chain crosses the membrane as a helical span at residues 278–298 (FSLCLASLCCLLDPILYYFMA). The Cytoplasmic portion of the chain corresponds to 299–328 (SEFRDQLSRHGSSVTRSRLMSRESGSSMVN).

Belongs to the G-protein coupled receptor 1 family.

The protein localises to the cell membrane. In terms of biological role, putative receptor for purines coupled to G-proteins. This Mus musculus (Mouse) protein is Putative P2Y purinoceptor 10 (P2ry10).